The primary structure comprises 350 residues: Phenylalanine--tRNA ligase alpha subunit (350 aa).

E271 lines the Mg(2+) pocket.

The protein belongs to the class-II aminoacyl-tRNA synthetase family. Phe-tRNA synthetase alpha subunit type 1 subfamily. In terms of assembly, tetramer of two alpha and two beta subunits. Mg(2+) is required as a cofactor.

The protein resides in the cytoplasm. It carries out the reaction tRNA(Phe) + L-phenylalanine + ATP = L-phenylalanyl-tRNA(Phe) + AMP + diphosphate + H(+). This Paracidovorax citrulli (strain AAC00-1) (Acidovorax citrulli) protein is Phenylalanine--tRNA ligase alpha subunit.